A 202-amino-acid chain; its full sequence is Protein-methionine-sulfoxide reductase heme-binding subunit MsrQ (202 aa).

The next 6 helical transmembrane spans lie at 8 to 28 (YAWL…FLLW), 50 to 70 (LALI…WLGW), 76 to 96 (IRKA…GIYL), 114 to 134 (PFIT…LTSG), 148 to 168 (LLHR…WWGV), and 174 to 194 (GPLL…KTPA).

Belongs to the MsrQ family. As to quaternary structure, heterodimer of a catalytic subunit (MsrP) and a heme-binding subunit (MsrQ). The cofactor is FMN. Heme b serves as cofactor.

It localises to the cell membrane. Part of the MsrPQ system that repairs oxidized cell envelope proteins containing methionine sulfoxide residues (Met-O), using respiratory chain electrons. Thus protects these proteins from oxidative-stress damage caused by reactive species of oxygen and chlorine. MsrPQ is essential for the maintenance of envelope integrity under bleach stress, rescuing a wide series of structurally unrelated cell envelope proteins from methionine oxidation. MsrQ provides electrons for reduction to the reductase catalytic subunit MsrP, using the quinone pool of the respiratory chain. The protein is Protein-methionine-sulfoxide reductase heme-binding subunit MsrQ of Deinococcus radiodurans (strain ATCC 13939 / DSM 20539 / JCM 16871 / CCUG 27074 / LMG 4051 / NBRC 15346 / NCIMB 9279 / VKM B-1422 / R1).